A 439-amino-acid polypeptide reads, in one-letter code: Ribulose bisphosphate carboxylase/oxygenase activase 2, chloroplastic (439 aa).

Residues 1–58 (MATSVSTIGAANKAPLSLNNSVAGTSVPSTAFFGKTLKKVYGKGVSSPKVTNRSLRIA) constitute a chloroplast transit peptide. Residue 169 to 176 (GGKGQGKS) coordinates ATP.

This sequence belongs to the RuBisCO activase family.

The protein resides in the plastid. The protein localises to the chloroplast stroma. Functionally, activation of RuBisCO (ribulose-1,5-bisphosphate carboxylase/oxygenase; EC 4.1.1.39) involves the ATP-dependent carboxylation of the epsilon-amino group of lysine leading to a carbamate structure. This Nicotiana tabacum (Common tobacco) protein is Ribulose bisphosphate carboxylase/oxygenase activase 2, chloroplastic (RCA).